The chain runs to 244 residues: Phosphonates import ATP-binding protein PhnC 2 (244 aa).

The 239-residue stretch at 6-244 (IECHNLETAY…LQAQFVVNNQ (239 aa)) folds into the ABC transporter domain. 41-48 (GLNGAGKS) is a binding site for ATP.

This sequence belongs to the ABC transporter superfamily. Phosphonates importer (TC 3.A.1.9.1) family. As to quaternary structure, the complex is composed of two ATP-binding proteins (PhnC), two transmembrane proteins (PhnE) and a solute-binding protein (PhnD).

It localises to the cell inner membrane. The enzyme catalyses phosphonate(out) + ATP + H2O = phosphonate(in) + ADP + phosphate + H(+). Functionally, part of the ABC transporter complex PhnCDE involved in phosphonates import. Responsible for energy coupling to the transport system. The sequence is that of Phosphonates import ATP-binding protein PhnC 2 from Nostoc sp. (strain PCC 7120 / SAG 25.82 / UTEX 2576).